Consider the following 425-residue polypeptide: Histone-binding protein RBBP7 (425 aa).

The residue at position 2 (A2) is an N-acetylalanine. Position 3 is a phosphoserine (S3). Position 4 is an N6-acetyllysine; alternate (K4). K4 is covalently cross-linked (Glycyl lysine isopeptide (Lys-Gly) (interchain with G-Cter in SUMO2); alternate). K4 is covalently cross-linked (Glycyl lysine isopeptide (Lys-Gly) (interchain with G-Cter in ubiquitin); alternate). Phosphothreonine is present on T10. 2 positions are modified to phosphoserine: E13 and S95. WD repeat units lie at residues 47 to 122, 128 to 173, 181 to 217, 228 to 269, 275 to 312, 318 to 369, and 376 to 403; these read QWLP…KINH, RARY…LRLR, GLSW…KIVD, VVED…HLVD, VNCL…LHTF, EIFQ…LFIH, and ISDF…IWQM. A Glycyl lysine isopeptide (Lys-Gly) (interchain with G-Cter in SUMO2) cross-link involves residue K101. At K119 the chain carries N6-acetyllysine. K155 participates in a covalent cross-link: Glycyl lysine isopeptide (Lys-Gly) (interchain with G-Cter in SUMO2). The residue at position 159 (K159) is an N6-acetyllysine; alternate. K159 is covalently cross-linked (Glycyl lysine isopeptide (Lys-Gly) (interchain with G-Cter in SUMO2); alternate). S354 carries the phosphoserine modification.

Belongs to the WD repeat RBAP46/RBAP48/MSI1 family. In terms of assembly, binds directly to helix 1 of the histone fold of histone H4, a region that is not accessible when H4 is in chromatin. Subunit of the type B histone acetyltransferase (HAT) complex, composed of RBBP7 and HAT1. Subunit of the core histone deacetylase (HDAC) complex, which is composed of HDAC1, HDAC2, RBBP4 and RBBP7. The core HDAC complex associates with SIN3A, ARID4B/SAP180, SAP18, SAP30, SAP130, SUDS3/SAP45 and possibly ARID4A/RBP1 and ING1 to form the SIN3 HDAC complex. Component of the nucleosome remodeling and deacetylase (NuRD) repressor complex, composed of core proteins MTA1, MTA2, MTA3, RBBP4, RBBP7, HDAC1, HDAC2, MBD2, MBD3, and peripherally associated proteins CDK2AP1, CDK2AP2, GATAD2A, GATAD2B, CHD3, CHD4 and CHD5. The exact stoichiometry of the NuRD complex is unknown, and some subunits such as MBD2 and MBD3, GATAD2A and GATAD2B, and CHD3, CHD4 and CHD5 define mutually exclusive NuRD complexes. The NuRD complex may interact with MBD3L1. The NuRD complex may interact with MBD3L2. Subunit of the PRC2/EED-EZH2 complex, which is composed of at least EED, EZH2, RBBP4, RBBP7 and SUZ12. The PRC2/EED-EZH2 complex may also associate with HDAC1. Component of the NURF-1 ISWI chromatin remodeling complex (also called the nucleosome-remodeling factor (NURF) complex) at least composed of SMARCA1 (isoform 2), BPTF, RBBP4 and RBBP7. Within the complex interacts with isoform 2 of SMARCA1. Component of the BPFT-SMARCA1 complex at least composed of SMARCA1 (isoform 1), BPFT, RBBP4 and RBBP7; the complex is catalytically inactive and does not remodel chromatin. Within the complex interacts with isoform 1 of SMARCA1. Interacts with BRCA1. Interacts with CDK2AP1. Interacts with CENPA. Interacts with CHD3. Interacts with CHD4. Interacts with CREBBP, and this interaction may be enhanced by the binding of phosphorylated CREB1 to CREBBP. Interacts with HDAC7. Interacts with MTA1. Interacts with PWWP2B. Interacts with RB1 (via viral protein-binding domain). Interacts with SUV39H1.

It localises to the nucleus. In terms of biological role, core histone-binding subunit that may target chromatin remodeling factors, histone acetyltransferases and histone deacetylases to their histone substrates in a manner that is regulated by nucleosomal DNA. Component of several complexes which regulate chromatin metabolism. These include the type B histone acetyltransferase (HAT) complex, which is required for chromatin assembly following DNA replication; the core histone deacetylase (HDAC) complex, which promotes histone deacetylation and consequent transcriptional repression; the nucleosome remodeling and histone deacetylase complex (the NuRD complex), which promotes transcriptional repression by histone deacetylation and nucleosome remodeling; and the PRC2/EED-EZH2 complex, which promotes repression of homeotic genes during development; and the NURF (nucleosome remodeling factor) complex. The sequence is that of Histone-binding protein RBBP7 (RBBP7) from Homo sapiens (Human).